We begin with the raw amino-acid sequence, 560 residues long: Zorya protein ZorC (560 aa).

Component of antiviral defense system Zorya type I, composed of ZorA, ZorB, ZorC and ZorD. Expression of Zorya type I in E.coli (strain MG1655) confers 10,000-fold resistance to phage SECphi27, 100-fold resistance to lambda, and 10-fold resistance to T7. While most T7 infected Zorya-containing cells undergo abortive infection, a minority produce viable phage progeny. These eventually accumulate to a high multiplicity of infection, leading to culture collapse by 2 hours after initial infection. ZorA and ZorB probably assemble in the cell inner membrane and exert their effect there. This Escherichia coli O139:H28 (strain E24377A / ETEC) protein is Zorya protein ZorC.